Reading from the N-terminus, the 311-residue chain is Vomeronasal type-1 receptor 3 (311 aa).

Residues 1-5 (MASKD) lie on the Extracellular side of the membrane. The chain crosses the membrane as a helical span at residues 6–26 (FAIGMILLSQIMVGFLGNFFL). Residues 27 to 51 (LYHYSFLCFTRGMLQSTDLILKHLT) lie on the Cytoplasmic side of the membrane. Residues 52–72 (IANSLVILSKGIPQTMAAFGL) form a helical membrane-spanning segment. The Extracellular portion of the chain corresponds to 73 to 92 (KDSLSDIGCKFVFYVHRVGR). A helical membrane pass occupies residues 93 to 113 (AVCVGNACLLSVFQVITISPS). Residues 114–130 (EFRWAELKLHAHKYIRS) are Cytoplasmic-facing. A helical transmembrane segment spans residues 131 to 151 (FILVLCWILNTLVNITVLLHV). The Extracellular segment spans residues 152 to 187 (TGKWNSINSTKTNDYGYCSGGSRSRIPHSLHIVLLS). Asparagine 159 carries N-linked (GlcNAc...) asparagine glycosylation. Residues 188 to 208 (SLDVLCLGLMTLASGSMVFIL) form a helical membrane-spanning segment. Residues 209–232 (HRHKQQVQHIHGTNLSARSSPESR) lie on the Cytoplasmic side of the membrane. The helical transmembrane segment at 233 to 249 (VTQSILVLVSTLCYFTR) threads the bilayer. The Extracellular portion of the chain corresponds to 250–264 (SPPSLHMSLFPNPSW). A helical membrane pass occupies residues 265-285 (WLLNTSALITACFPMVSPFVL). The Cytoplasmic portion of the chain corresponds to 286–311 (MSRHPRIPRLGSACCGRNPQFPKLVR).

The protein belongs to the G-protein coupled receptor 1 family.

It localises to the cell membrane. Its function is as follows. Putative pheromone receptor. In Homo sapiens (Human), this protein is Vomeronasal type-1 receptor 3 (VN1R3).